Here is a 73-residue protein sequence, read N- to C-terminus: Sec-independent protein translocase protein TatA (73 aa).

The helical transmembrane segment at 1-21 threads the bilayer; that stretch reads MGSFSIWHWVIVLVVVVLIFG. Positions 43–73 are disordered; it reads MKSEGEDAAQTPPAAQKEGGRVIDAEPADKK. Residues 60-73 show a composition bias toward basic and acidic residues; sequence EGGRVIDAEPADKK.

Belongs to the TatA/E family. As to quaternary structure, the Tat system comprises two distinct complexes: a TatABC complex, containing multiple copies of TatA, TatB and TatC subunits, and a separate TatA complex, containing only TatA subunits. Substrates initially bind to the TatABC complex, which probably triggers association of the separate TatA complex to form the active translocon.

It is found in the cell inner membrane. Part of the twin-arginine translocation (Tat) system that transports large folded proteins containing a characteristic twin-arginine motif in their signal peptide across membranes. TatA could form the protein-conducting channel of the Tat system. This Laribacter hongkongensis (strain HLHK9) protein is Sec-independent protein translocase protein TatA.